We begin with the raw amino-acid sequence, 409 residues long: Putative lipoate-protein ligase A (409 aa).

Residues 146 to 330 (GPDNCRLVFY…RFQKTFKVDG (185 aa)) enclose the BPL/LPL catalytic domain. Residues Arg-188, 193–196 (GTVL), and Lys-249 contribute to the ATP site. Lys-249 is a (R)-lipoate binding site.

It belongs to the LplA family. As to quaternary structure, monomer.

It catalyses the reaction L-lysyl-[lipoyl-carrier protein] + (R)-lipoate + ATP = N(6)-[(R)-lipoyl]-L-lysyl-[lipoyl-carrier protein] + AMP + diphosphate + H(+). It participates in protein modification; protein lipoylation via exogenous pathway; protein N(6)-(lipoyl)lysine from lipoate: step 1/2. Its pathway is protein modification; protein lipoylation via exogenous pathway; protein N(6)-(lipoyl)lysine from lipoate: step 2/2. Catalyzes both the ATP-dependent activation of exogenously supplied lipoate to lipoyl-AMP and the transfer of the activated lipoyl onto the lipoyl domains of lipoate-dependent enzymes. This Saccharomyces cerevisiae (strain YJM789) (Baker's yeast) protein is Putative lipoate-protein ligase A (AIM22).